Here is a 44-residue protein sequence, read N- to C-terminus: Large ribosomal subunit protein bL34 (44 aa).

The segment at 21–44 is disordered; sequence RMDTSGGRRILSARRRKGRKTISA. Over residues 31–44 the composition is skewed to basic residues; that stretch reads LSARRRKGRKTISA.

It belongs to the bacterial ribosomal protein bL34 family.

This Endomicrobium trichonymphae protein is Large ribosomal subunit protein bL34.